Here is a 362-residue protein sequence, read N- to C-terminus: Chorismate synthase (362 aa).

NADP(+) contacts are provided by R48 and R54. FMN is bound by residues 131 to 133, 243 to 244, G287, 302 to 306, and R328; these read RSS, NA, and KPTSS.

Belongs to the chorismate synthase family. As to quaternary structure, homotetramer. FMNH2 is required as a cofactor.

The catalysed reaction is 5-O-(1-carboxyvinyl)-3-phosphoshikimate = chorismate + phosphate. It functions in the pathway metabolic intermediate biosynthesis; chorismate biosynthesis; chorismate from D-erythrose 4-phosphate and phosphoenolpyruvate: step 7/7. In terms of biological role, catalyzes the anti-1,4-elimination of the C-3 phosphate and the C-6 proR hydrogen from 5-enolpyruvylshikimate-3-phosphate (EPSP) to yield chorismate, which is the branch point compound that serves as the starting substrate for the three terminal pathways of aromatic amino acid biosynthesis. This reaction introduces a second double bond into the aromatic ring system. In Rhodopseudomonas palustris (strain ATCC BAA-98 / CGA009), this protein is Chorismate synthase.